A 354-amino-acid chain; its full sequence is 3-isopropylmalate dehydrogenase (354 aa).

73–86 (GPAYDKLDRPLRPE) provides a ligand contact to NAD(+). 4 residues coordinate substrate: Arg93, Arg103, Arg131, and Asp221. The Mg(2+) site is built by Asp221, Asp245, and Asp249. 279 to 291 (GSAPDIAGQNLAN) provides a ligand contact to NAD(+).

It belongs to the isocitrate and isopropylmalate dehydrogenases family. LeuB type 1 subfamily. As to quaternary structure, homodimer. Mg(2+) serves as cofactor. Requires Mn(2+) as cofactor.

The protein localises to the cytoplasm. The catalysed reaction is (2R,3S)-3-isopropylmalate + NAD(+) = 4-methyl-2-oxopentanoate + CO2 + NADH. Its pathway is amino-acid biosynthesis; L-leucine biosynthesis; L-leucine from 3-methyl-2-oxobutanoate: step 3/4. Its function is as follows. Catalyzes the oxidation of 3-carboxy-2-hydroxy-4-methylpentanoate (3-isopropylmalate) to 3-carboxy-4-methyl-2-oxopentanoate. The product decarboxylates to 4-methyl-2 oxopentanoate. The protein is 3-isopropylmalate dehydrogenase of Chromobacterium violaceum (strain ATCC 12472 / DSM 30191 / JCM 1249 / CCUG 213 / NBRC 12614 / NCIMB 9131 / NCTC 9757 / MK).